The chain runs to 148 residues: Large ribosomal subunit protein bL9 (148 aa).

This sequence belongs to the bacterial ribosomal protein bL9 family.

In terms of biological role, binds to the 23S rRNA. This Listeria monocytogenes serotype 4b (strain CLIP80459) protein is Large ribosomal subunit protein bL9.